A 296-amino-acid polypeptide reads, in one-letter code: Light-independent protochlorophyllide reductase iron-sulfur ATP-binding protein (296 aa).

Residues 39 to 44 and lysine 68 each bind ATP; that span reads GIGKST. Residue serine 43 participates in Mg(2+) binding. [4Fe-4S] cluster is bound by residues cysteine 124 and cysteine 158. 209 to 210 serves as a coordination point for ATP; the sequence is NR.

Belongs to the NifH/BchL/ChlL family. Homodimer. Protochlorophyllide reductase is composed of three subunits; ChlL, ChlN and ChlB. The cofactor is [4Fe-4S] cluster.

It catalyses the reaction chlorophyllide a + oxidized 2[4Fe-4S]-[ferredoxin] + 2 ADP + 2 phosphate = protochlorophyllide a + reduced 2[4Fe-4S]-[ferredoxin] + 2 ATP + 2 H2O. It functions in the pathway porphyrin-containing compound metabolism; chlorophyll biosynthesis (light-independent). Functionally, component of the dark-operative protochlorophyllide reductase (DPOR) that uses Mg-ATP and reduced ferredoxin to reduce ring D of protochlorophyllide (Pchlide) to form chlorophyllide a (Chlide). This reaction is light-independent. The L component serves as a unique electron donor to the NB-component of the complex, and binds Mg-ATP. This is Light-independent protochlorophyllide reductase iron-sulfur ATP-binding protein from Prochlorococcus marinus (strain SARG / CCMP1375 / SS120).